The chain runs to 626 residues: Chaperone protein HtpG (626 aa).

The interval 1–331 (MSETVERHEF…TDDLPLNVSR (331 aa)) is a; substrate-binding. The segment at 332–544 (EMLQSTPTLQ…GMGPDLQMQR (213 aa)) is b. The c stretch occupies residues 545–626 (LLRRAGRGFG…GTAAKPAGSA (82 aa)).

It belongs to the heat shock protein 90 family. Homodimer.

Its subcellular location is the cytoplasm. Functionally, molecular chaperone. Has ATPase activity. The sequence is that of Chaperone protein HtpG from Methylorubrum extorquens (strain CM4 / NCIMB 13688) (Methylobacterium extorquens).